A 251-amino-acid chain; its full sequence is Cell division protein ZapD (251 aa).

This sequence belongs to the ZapD family. Interacts with FtsZ.

It is found in the cytoplasm. Cell division factor that enhances FtsZ-ring assembly. Directly interacts with FtsZ and promotes bundling of FtsZ protofilaments, with a reduction in FtsZ GTPase activity. This chain is Cell division protein ZapD, found in Paraburkholderia xenovorans (strain LB400).